The chain runs to 969 residues: Endogenous retrovirus group K member 11 Pol protein (969 aa).

The Reverse transcriptase domain maps to 57–245 (LEKGHIEPSF…TPFHYLGMQI (189 aa)). The LPQG motif lies at 161-164 (LPQG). The 131-residue stretch at 460–590 (LENALTVFTD…ADLLVSSALI (131 aa)) folds into the RNase H type-1 domain. Mg(2+) is bound by residues D469, E497, D517, and D582. The segment at 587–628 (SALIKAQELHALTHVNAAGLKNKFDVTWKQAKDIVQHCTQCQ) adopts an Integrase-type zinc-finger fold. Positions 596, 600, 624, and 627 each coordinate Zn(2+). An Integrase catalytic domain is found at 642-803 (RGLCPNALWQ…TSAEQHLTGK (162 aa)). The integrase-type DNA-binding region spans 811-859 (KLIWWKDNKNKTWEIGKVITWGRGFACVSPGENQLPVWIPTRHLKFYNE).

Belongs to the beta type-B retroviral polymerase family. HERV class-II K(HML-2) pol subfamily.

It carries out the reaction DNA(n) + a 2'-deoxyribonucleoside 5'-triphosphate = DNA(n+1) + diphosphate. The enzyme catalyses Endonucleolytic cleavage to 5'-phosphomonoester.. In terms of biological role, early post-infection, the reverse transcriptase converts the viral RNA genome into double-stranded viral DNA. The RNase H domain of the reverse transcriptase performs two functions. It degrades the RNA template and specifically removes the RNA primer from the RNA/DNA hybrid. Following nuclear import, the integrase catalyzes the insertion of the linear, double-stranded viral DNA into the host cell chromosome. Endogenous Pol proteins may have kept, lost or modified their original function during evolution. The protein is Endogenous retrovirus group K member 11 Pol protein (ERVK-11) of Homo sapiens (Human).